The following is a 74-amino-acid chain: ATP synthase subunit 9, mitochondrial (74 aa).

2 consecutive transmembrane segments (helical) span residues 8–28 (IGAG…GNVF) and 50–70 (ILGF…AFLI).

Belongs to the ATPase C chain family. In terms of assembly, F-type ATPases have 2 components, CF(1) - the catalytic core - and CF(0) - the membrane proton channel. CF(1) has five subunits: alpha(3), beta(3), gamma(1), delta(1), epsilon(1). CF(0) has three main subunits: a, b and c.

The protein resides in the mitochondrion membrane. In terms of biological role, this protein is one of the chains of the nonenzymatic membrane component (F0) of mitochondrial ATPase. The polypeptide is ATP synthase subunit 9, mitochondrial (ATP9) (Triticum aestivum (Wheat)).